The following is an 85-amino-acid chain: Cell division protein ZapA (85 aa).

The stretch at 60–85 (AVNVVHDYLKLKEQYEKLEIQLKEKE) forms a coiled coil.

This sequence belongs to the ZapA family. Type 2 subfamily. Homodimer. Interacts with FtsZ.

The protein resides in the cytoplasm. In terms of biological role, activator of cell division through the inhibition of FtsZ GTPase activity, therefore promoting FtsZ assembly into bundles of protofilaments necessary for the formation of the division Z ring. It is recruited early at mid-cell but it is not essential for cell division. The chain is Cell division protein ZapA from Bacillus pumilus (strain SAFR-032).